Reading from the N-terminus, the 305-residue chain is ATP-dependent Clp protease proteolytic subunit-related protein 4, chloroplastic (305 aa).

The transit peptide at 1–68 (MEVAAATATS…SSDLCGAKLR (68 aa)) directs the protein to the chloroplast.

The protein belongs to the peptidase S14 family. In terms of assembly, component of the chloroplastic Clp protease core complex which consist of at least 16 proteins: CLPP4 (3 copies), CLPP5 (3 copies), CLPR4 (2 copies), ClpP1 (1 copy), CLPP6 (1 copy), CLPR2 (1 copy), CLPT1 (1 copy), CLPT2 (1 copy) and 3 copies of CLPP3 and/or CLPR1 and/or CLPR3. The core complex is organized in two heptameric rings, one containing CLPP3,4,5,6 in a 1:2:3:1 ratio and the other CLPP1 and CLPR1,2,3,4 in a 3:1:1:1:1 ratio.

It is found in the plastid. The protein localises to the chloroplast. In terms of biological role, involved in plastid protein homeostasis. This chain is ATP-dependent Clp protease proteolytic subunit-related protein 4, chloroplastic, found in Arabidopsis thaliana (Mouse-ear cress).